We begin with the raw amino-acid sequence, 278 residues long: Release factor glutamine methyltransferase (278 aa).

Residues 120–124, D143, and N184 each bind S-adenosyl-L-methionine; that span reads GTGTG. 184-187 contributes to the substrate binding site; that stretch reads NPPY.

The protein belongs to the protein N5-glutamine methyltransferase family. PrmC subfamily.

It carries out the reaction L-glutaminyl-[peptide chain release factor] + S-adenosyl-L-methionine = N(5)-methyl-L-glutaminyl-[peptide chain release factor] + S-adenosyl-L-homocysteine + H(+). Functionally, methylates the class 1 translation termination release factors RF1/PrfA and RF2/PrfB on the glutamine residue of the universally conserved GGQ motif. In Deinococcus radiodurans (strain ATCC 13939 / DSM 20539 / JCM 16871 / CCUG 27074 / LMG 4051 / NBRC 15346 / NCIMB 9279 / VKM B-1422 / R1), this protein is Release factor glutamine methyltransferase.